The primary structure comprises 59 residues: Large ribosomal subunit protein uL30 (59 aa).

The protein belongs to the universal ribosomal protein uL30 family. In terms of assembly, part of the 50S ribosomal subunit.

The polypeptide is Large ribosomal subunit protein uL30 (Geotalea uraniireducens (strain Rf4) (Geobacter uraniireducens)).